A 347-amino-acid polypeptide reads, in one-letter code: NADH-ubiquinone oxidoreductase chain 2 (347 aa).

11 helical membrane-spanning segments follow: residues 1–21, 25–45, 59–79, 96–116, 127–147, 149–169, 178–198, 200–220, 237–257, 276–296, and 325–345; these read MNPL…VIVM, HWLT…PMLM, YFLT…INLT, IIMT…FWVP, CLIL…MISP, INLN…GWGG, IMAY…AYNP, MTML…MLLI, IPLV…LPPL, IILP…YMRL, and LLSP…TMLL.

It belongs to the complex I subunit 2 family. In terms of assembly, core subunit of respiratory chain NADH dehydrogenase (Complex I) which is composed of 45 different subunits. Interacts with TMEM242.

The protein localises to the mitochondrion inner membrane. The enzyme catalyses a ubiquinone + NADH + 5 H(+)(in) = a ubiquinol + NAD(+) + 4 H(+)(out). Its function is as follows. Core subunit of the mitochondrial membrane respiratory chain NADH dehydrogenase (Complex I) which catalyzes electron transfer from NADH through the respiratory chain, using ubiquinone as an electron acceptor. Essential for the catalytic activity and assembly of complex I. This is NADH-ubiquinone oxidoreductase chain 2 from Natalus tumidirostris (Trinidadian funnel-eared bat).